The primary structure comprises 723 residues: Pentatricopeptide repeat-containing protein At5g50280, chloroplastic (723 aa).

A chloroplast-targeting transit peptide spans 1 to 44 (MSMASSSLATQSFFSSFPLSHRLHFPVPYLLLRSSFFRKPLSLS). A disordered region spans residues 70–97 (IQQPENSTINSEESECEEEDDEEGDDFT). Acidic residues predominate over residues 81-97 (EESECEEEDDEEGDDFT). PPR repeat units follow at residues 272–306 (DVRLYNAAISGLSASQRYDDAWEVYEAMDKINVYP), 307–342 (DNVTCAILITTLRKAGRSAKEVWEIFEKMSEKGVKW), 343–377 (SQDVFGGLVKSFCDEGLKEEALVIQTEMEKKGIRS), 378–412 (NTIVYNTLMDAYNKSNHIEEVEGLFTEMRDKGLKP), 413–447 (SAATYNILMDAYARRMQPDIVETLLREMEDLGLEP), 448–483 (NVKSYTCLISAYGRTKKMSDMAADAFLRMKKVGLKP), 484–518 (SSHSYTALIHAYSVSGWHEKAYASFEEMCKEGIKP), 519–553 (SVETYTSVLDAFRRSGDTGKLMEIWKLMLREKIKG), 554–588 (TRITYNTLLDGFAKQGLYIEARDVVSEFSKMGLQP), 589–623 (SVMTYNMLMNAYARGGQDAKLPQLLKEMAALNLKP), and 624–658 (DSITYSTMIYAFVRVRDFKRAFFYHKMMVKSGQVP). The interval 700–723 (TKGKKDEFWKYKTNRTTSPGRHRS) is disordered. Positions 713–723 (NRTTSPGRHRS) are enriched in polar residues.

It belongs to the PPR family. P subfamily.

The protein localises to the plastid. It is found in the chloroplast. This Arabidopsis thaliana (Mouse-ear cress) protein is Pentatricopeptide repeat-containing protein At5g50280, chloroplastic (EMB1006).